Consider the following 1491-residue polypeptide: Pleckstrin homology domain-containing family H member 2 (1491 aa).

The stretch at alanine 19–valine 177 forms a coiled coil. Disordered regions lie at residues alanine 232–proline 435, aspartate 506–phenylalanine 546, and serine 612–alanine 668. The span at threonine 253–arginine 264 shows a compositional bias: polar residues. A compositionally biased stretch (basic and acidic residues) spans lysine 374 to lysine 385. The segment covering leucine 392–proline 406 has biased composition (polar residues). Low complexity predominate over residues serine 657 to aspartate 666. PH domains lie at proline 702–arginine 796 and lysine 810–glycine 918. In terms of domain architecture, MyTH4 spans histidine 954–leucine 1109. One can recognise an FERM domain in the interval phenylalanine 1120–lysine 1449. The interval glutamine 1466 to leucine 1491 is disordered.

In terms of assembly, self-associates. Interacts with TGFB1I1. In terms of tissue distribution, expressed in the kidney and testis. Expressed in the kidney exclusively by glomerular podocytes.

The protein localises to the cytoplasm. It is found in the cytoskeleton. Its subcellular location is the cell membrane. It localises to the cell projection. The protein resides in the lamellipodium. Functionally, in the kidney glomerulus may play a role in linking podocyte foot processes to the glomerular basement membrane. May be involved in stabilization of F-actin by attenuating its depolymerization. Can recruit TGFB1I1 from focal adhesions to podocyte lamellipodia. The polypeptide is Pleckstrin homology domain-containing family H member 2 (Plekhh2) (Mus musculus (Mouse)).